A 209-amino-acid chain; its full sequence is 8-oxoguanine DNA glycosylase/AP lyase (209 aa).

Active-site residues include Lys-132 and Asp-150.

The protein belongs to the type-2 OGG1 family.

It carries out the reaction 2'-deoxyribonucleotide-(2'-deoxyribose 5'-phosphate)-2'-deoxyribonucleotide-DNA = a 3'-end 2'-deoxyribonucleotide-(2,3-dehydro-2,3-deoxyribose 5'-phosphate)-DNA + a 5'-end 5'-phospho-2'-deoxyribonucleoside-DNA + H(+). Catalyzes the excision of an oxidatively damaged form of guanine (7,8-dihydro-8-oxoguanine = 8-oxoG) from DNA. Also cleaves the DNA backbone at apurinic/apyrimidinic sites (AP sites). This Picrophilus torridus (strain ATCC 700027 / DSM 9790 / JCM 10055 / NBRC 100828 / KAW 2/3) protein is 8-oxoguanine DNA glycosylase/AP lyase.